A 444-amino-acid polypeptide reads, in one-letter code: Multidrug resistance protein MdtA (444 aa).

An N-terminal signal peptide occupies residues 1–20 (MKSQSKRTSRLFVFVGVVVA). Residues 37–52 (NNTSGAQQSARGQDTS) show a composition bias toward polar residues. Disordered regions lie at residues 37–60 (NNTSGAQQSARGQDTSHGGRRNTP) and 398–444 (TPRS…AEKS). A compositionally biased stretch (low complexity) spans 409 to 419 (ASAEKAAAEAE). Polar residues predominate over residues 435–444 (ARSTTAAEKS).

The protein belongs to the membrane fusion protein (MFP) (TC 8.A.1) family. In terms of assembly, part of a tripartite efflux system composed of MdtA, MdtB and MdtC.

It is found in the cell inner membrane. This Yersinia pseudotuberculosis serotype O:3 (strain YPIII) protein is Multidrug resistance protein MdtA.